The primary structure comprises 543 residues: Chaperonin GroEL (543 aa).

ATP contacts are provided by residues 31–34 (TMGP), 88–92 (DGTTT), G415, 479–481 (DAL), and D495.

It belongs to the chaperonin (HSP60) family. As to quaternary structure, forms a cylinder of 14 subunits composed of two heptameric rings stacked back-to-back. Interacts with the co-chaperonin GroES.

It is found in the cytoplasm. It catalyses the reaction ATP + H2O + a folded polypeptide = ADP + phosphate + an unfolded polypeptide.. In terms of biological role, together with its co-chaperonin GroES, plays an essential role in assisting protein folding. The GroEL-GroES system forms a nano-cage that allows encapsulation of the non-native substrate proteins and provides a physical environment optimized to promote and accelerate protein folding. The chain is Chaperonin GroEL from Clostridium tetani (strain Massachusetts / E88).